Consider the following 505-residue polypeptide: Serine carboxypeptidase-like 47 (505 aa).

A signal peptide spans 1–22 (MEAKTFFLFMLFIFSQSWLSTS). Residues N37, N86, and N122 are each glycosylated (N-linked (GlcNAc...) asparagine). Cystine bridges form between C138-C378, C306-C321, and C344-C349. Residue S228 is part of the active site. The N-linked (GlcNAc...) asparagine glycan is linked to N301. D416 is a catalytic residue. N-linked (GlcNAc...) asparagine glycans are attached at residues N432 and N444. H473 is a catalytic residue.

This sequence belongs to the peptidase S10 family. As to expression, expressed in roots, flowers and siliques.

Its subcellular location is the secreted. Its function is as follows. Probable carboxypeptidase. This chain is Serine carboxypeptidase-like 47 (SCPL47), found in Arabidopsis thaliana (Mouse-ear cress).